We begin with the raw amino-acid sequence, 1116 residues long: Eukaryotic translation initiation factor 2-alpha kinase 3 (1116 aa).

The first 29 residues, 1 to 29 (MERAISPGLLVRALLLLLLLLGLAARTVA), serve as a signal peptide directing secretion. Residues 30-514 (AGRARGLPAP…HYNKNIRKKD (485 aa)) lie on the Lumenal side of the membrane. The interval 77–101 (ALPAAAGEQEPRGPEPDDETELRPR) is disordered. N258 carries N-linked (GlcNAc...) asparagine glycosylation. Residues 515–535 (PVLLLHWWKEIVATILFCIIA) form a helical membrane-spanning segment. The Cytoplasmic portion of the chain corresponds to 536–1116 (TTFIVRRLFH…NNSHSPLPSN (581 aa)). The tract at residues 550 to 571 (RQRKESETQCQTENKYDSVSGE) is disordered. One can recognise a Protein kinase domain in the interval 593–1077 (FEPIQCLGRG…AINIIENAVF (485 aa)). An ATP-binding site is contributed by 599–607 (LGRGGFGVV). Position 619 is a phosphotyrosine; by autocatalysis (Y619). ATP is bound at residue K622. Residues 647-888 (EHPGIVRYFN…SPKVYLYIQM (242 aa)) form an insert loop region. A Phosphoserine modification is found at S715. The residue at position 802 (T802) is a Phosphothreonine. The interval 841–863 (KPTSSKSSSEATLSISPPRPTTL) is disordered. Positions 844 to 856 (SSKSSSEATLSIS) are enriched in low complexity. Residue D937 is the Proton acceptor of the active site. T982 is modified (phosphothreonine). The disordered stretch occupies residues 1090–1116 (QRSRSLSSSGTKHSRQSNNSHSPLPSN). A Phosphoserine modification is found at S1094. Residues 1105 to 1116 (QSNNSHSPLPSN) show a composition bias toward polar residues.

The protein belongs to the protein kinase superfamily. Ser/Thr protein kinase family. GCN2 subfamily. Forms dimers with HSPA5/BIP in resting cells. Homotetramerizes in response to endoplasmic reticulum (ER) stress, leading to its activation. Interacts with HSP90B1/GRP94. Interacts with DNAJC3; inhibiting EIF2AK3/PERK activity. Interacts with ATAD3A; ATAD3A and EIF2S1/eIF-2-alpha occupy a common binding site within the cytoplasmic loop of EIF2AK3/PERK, leading to prevent EIF2AK3/PERK association with its substrate EIF2S1/eIF-2-alpha. Interacts with MFN2. Interacts with TMEM33. Interacts with PDIA6. Interacts with LACC1. Oligomerization of the N-terminal ER luminal domain by ER stress promotes EIF2AK3/PERK trans-autophosphorylation of the C-terminal cytoplasmic kinase domain at multiple residues including Thr-982 on the kinase activation loop. Autophosphorylated at Tyr-619 following endoplasmic reticulum stress, leading to activate its activity. Dephosphorylated at Tyr-619 by PTPN1/PTP1B, leading to inactivate its enzyme activity. Phosphorylation at Thr-802 by AKT (AKT1, AKT2 and/or AKT3) inactivates EIF2AK3/PERK. Post-translationally, ADP-ribosylated by PARP16 upon ER stress, which increases kinase activity. As to expression, ubiquitous. A high level expression is seen in secretory tissues.

It is found in the endoplasmic reticulum membrane. It carries out the reaction L-seryl-[protein] + ATP = O-phospho-L-seryl-[protein] + ADP + H(+). The enzyme catalyses L-threonyl-[protein] + ATP = O-phospho-L-threonyl-[protein] + ADP + H(+). The catalysed reaction is L-tyrosyl-[protein] + ATP = O-phospho-L-tyrosyl-[protein] + ADP + H(+). Inhibited by HSPA5/BIP in absence of stress. Perturbation in protein folding in the endoplasmic reticulum (ER) promotes reversible dissociation from HSPA5/BIP and oligomerization, resulting in trans-autophosphorylation and kinase activity induction. Inactivated following phosphorylation at Thr-802 by AKT (AKT1, AKT2 and/or AKT3). Inhibited by ATAD3A at mitochondria-endoplasmic reticulum contact sites, providing a safe haven for mitochondrial protein translation during ER stress. Metabolic-stress sensing protein kinase that phosphorylates the alpha subunit of eukaryotic translation initiation factor 2 (EIF2S1/eIF-2-alpha) in response to various stress, such as unfolded protein response (UPR). Key effector of the integrated stress response (ISR) to unfolded proteins: EIF2AK3/PERK specifically recognizes and binds misfolded proteins, leading to its activation and EIF2S1/eIF-2-alpha phosphorylation. EIF2S1/eIF-2-alpha phosphorylation in response to stress converts EIF2S1/eIF-2-alpha in a global protein synthesis inhibitor, leading to a global attenuation of cap-dependent translation, while concomitantly initiating the preferential translation of ISR-specific mRNAs, such as the transcriptional activators ATF4 and QRICH1, and hence allowing ATF4- and QRICH1-mediated reprogramming. The EIF2AK3/PERK-mediated unfolded protein response increases mitochondrial oxidative phosphorylation by promoting ATF4-mediated expression of COX7A2L/SCAF1, thereby increasing formation of respiratory chain supercomplexes. In contrast to most subcellular compartments, mitochondria are protected from the EIF2AK3/PERK-mediated unfolded protein response due to EIF2AK3/PERK inhibition by ATAD3A at mitochondria-endoplasmic reticulum contact sites. In addition to EIF2S1/eIF-2-alpha, also phosphorylates NFE2L2/NRF2 in response to stress, promoting release of NFE2L2/NRF2 from the BCR(KEAP1) complex, leading to nuclear accumulation and activation of NFE2L2/NRF2. Serves as a critical effector of unfolded protein response (UPR)-induced G1 growth arrest due to the loss of cyclin-D1 (CCND1). Involved in control of mitochondrial morphology and function. The sequence is that of Eukaryotic translation initiation factor 2-alpha kinase 3 from Homo sapiens (Human).